The sequence spans 228 residues: NOI-like protein (228 aa).

Residues 56–75 (AQDHQHSEKHHNDTSTDYHV) are compositionally biased toward basic and acidic residues. Disordered stretches follow at residues 56–87 (AQDH…HRRE) and 99–133 (RPHR…RNSD). Over residues 76–86 (VKQHRRKHHRR) the composition is skewed to basic residues. Over residues 118–133 (HGTSATMSSSVKRNSD) the composition is skewed to polar residues.

Belongs to the RIN4 family.

The polypeptide is NOI-like protein (Elaeis oleifera (American oil palm)).